A 79-amino-acid chain; its full sequence is D-alanyl carrier protein (79 aa).

One can recognise a Carrier domain in the interval 1-77 (MDTKQGVLDI…KIVAKVESLE (77 aa)). Residue Ser35 is modified to O-(pantetheine 4'-phosphoryl)serine.

This sequence belongs to the DltC family. In terms of processing, 4'-phosphopantetheine is transferred from CoA to a specific serine of apo-DCP.

It localises to the cytoplasm. It participates in cell wall biogenesis; lipoteichoic acid biosynthesis. Its function is as follows. Carrier protein involved in the D-alanylation of lipoteichoic acid (LTA). The loading of thioester-linked D-alanine onto DltC is catalyzed by D-alanine--D-alanyl carrier protein ligase DltA. The DltC-carried D-alanyl group is further transferred to cell membrane phosphatidylglycerol (PG) by forming an ester bond, probably catalyzed by DltD. D-alanylation of LTA plays an important role in modulating the properties of the cell wall in Gram-positive bacteria, influencing the net charge of the cell wall. This is D-alanyl carrier protein from Lactobacillus acidophilus (strain ATCC 700396 / NCK56 / N2 / NCFM).